A 113-amino-acid chain; its full sequence is MYFAFKGLCGRRFLPIASFLTILNRILFQYWLFYNSLKEEKTFQKIFFSMNLKCRKKKEPNHIIYSQPPFLLGFMVQLQSCVKLLPLYLLFLLQGNGAHYASAMTSKVLSFFL.

Helical transmembrane passes span 13 to 35 (FLPI…LFYN) and 70 to 92 (FLLG…LLFL).

The protein resides in the membrane. Functionally, identified in a screen for mutants with decreased levels of rDNA transcription. The protein is Regulator of rDNA transcription protein 7 (RRT7) of Saccharomyces cerevisiae (strain ATCC 204508 / S288c) (Baker's yeast).